We begin with the raw amino-acid sequence, 284 residues long: Bifunctional protein FolD (284 aa).

NADP(+)-binding positions include 164 to 166 (GRS) and S189.

The protein belongs to the tetrahydrofolate dehydrogenase/cyclohydrolase family. In terms of assembly, homodimer.

It catalyses the reaction (6R)-5,10-methylene-5,6,7,8-tetrahydrofolate + NADP(+) = (6R)-5,10-methenyltetrahydrofolate + NADPH. The enzyme catalyses (6R)-5,10-methenyltetrahydrofolate + H2O = (6R)-10-formyltetrahydrofolate + H(+). Its pathway is one-carbon metabolism; tetrahydrofolate interconversion. Functionally, catalyzes the oxidation of 5,10-methylenetetrahydrofolate to 5,10-methenyltetrahydrofolate and then the hydrolysis of 5,10-methenyltetrahydrofolate to 10-formyltetrahydrofolate. The chain is Bifunctional protein FolD from Listeria monocytogenes serotype 4b (strain F2365).